The primary structure comprises 543 residues: Glucose-6-phosphate isomerase (543 aa).

Residue glutamate 353 is the Proton donor of the active site. Catalysis depends on residues histidine 384 and lysine 504.

The protein belongs to the GPI family.

The protein localises to the cytoplasm. It carries out the reaction alpha-D-glucose 6-phosphate = beta-D-fructose 6-phosphate. It functions in the pathway carbohydrate biosynthesis; gluconeogenesis. The protein operates within carbohydrate degradation; glycolysis; D-glyceraldehyde 3-phosphate and glycerone phosphate from D-glucose: step 2/4. Its function is as follows. Catalyzes the reversible isomerization of glucose-6-phosphate to fructose-6-phosphate. In Roseiflexus castenholzii (strain DSM 13941 / HLO8), this protein is Glucose-6-phosphate isomerase.